The following is a 92-amino-acid chain: MLEIEIVYGLPDRQVLKTMQLAEGTTVRTAALQSGLDGIFENLNLHSAPLGIFGKAVKDDTPLRDGDRIEVYRPLLIDPKEARRKRVQNQEE.

The protein belongs to the UPF0125 (RnfH) family.

This is Protein RnfH from Neisseria gonorrhoeae (strain NCCP11945).